Here is a 494-residue protein sequence, read N- to C-terminus: Acetyl-coenzyme A carboxylase carboxyl transferase subunit beta, chloroplastic (494 aa).

Positions 230 to 494 (LWVQCENCYG…LHGFFPLNQN (265 aa)) constitute a CoA carboxyltransferase N-terminal domain. The Zn(2+) site is built by Cys234, Cys237, Cys253, and Cys256. The C4-type zinc finger occupies 234-256 (CENCYGLNYKKFFRSKMNICEQC).

This sequence belongs to the AccD/PCCB family. As to quaternary structure, acetyl-CoA carboxylase is a heterohexamer composed of biotin carboxyl carrier protein, biotin carboxylase and 2 subunits each of ACCase subunit alpha and ACCase plastid-coded subunit beta (accD). It depends on Zn(2+) as a cofactor.

The protein localises to the plastid. It is found in the chloroplast stroma. The catalysed reaction is N(6)-carboxybiotinyl-L-lysyl-[protein] + acetyl-CoA = N(6)-biotinyl-L-lysyl-[protein] + malonyl-CoA. The protein operates within lipid metabolism; malonyl-CoA biosynthesis; malonyl-CoA from acetyl-CoA: step 1/1. Functionally, component of the acetyl coenzyme A carboxylase (ACC) complex. Biotin carboxylase (BC) catalyzes the carboxylation of biotin on its carrier protein (BCCP) and then the CO(2) group is transferred by the transcarboxylase to acetyl-CoA to form malonyl-CoA. In Drimys granadensis, this protein is Acetyl-coenzyme A carboxylase carboxyl transferase subunit beta, chloroplastic.